Consider the following 131-residue polypeptide: Small ribosomal subunit protein uS8 (131 aa).

The protein belongs to the universal ribosomal protein uS8 family. Part of the 30S ribosomal subunit. Contacts proteins S5 and S12.

Its function is as follows. One of the primary rRNA binding proteins, it binds directly to 16S rRNA central domain where it helps coordinate assembly of the platform of the 30S subunit. The chain is Small ribosomal subunit protein uS8 from Geobacillus stearothermophilus (Bacillus stearothermophilus).